A 335-amino-acid chain; its full sequence is uncharacterized protein (335 aa).

This is an uncharacterized protein from Schizosaccharomyces pombe (strain 972 / ATCC 24843) (Fission yeast).